A 261-amino-acid polypeptide reads, in one-letter code: Chanoclavine-I dehydrogenase easD (261 aa).

The N-terminal stretch at 1–20 (MPSMTSKVFAITGGASGIGA) is a signal peptide. Isoleucine 18 lines the NADP(+) pocket. Asparagine 43 carries an N-linked (GlcNAc...) asparagine glycan. Positions 66, 132, 166, 170, and 201 each coordinate NADP(+). Tyrosine 166 serves as the catalytic Proton donor. Lysine 170 functions as the Lowers pKa of active site Tyr in the catalytic mechanism.

It belongs to the short-chain dehydrogenases/reductases (SDR) family. In terms of assembly, homotetramer.

The enzyme catalyses chanoclavine-I + NAD(+) = chanoclavine-I aldehyde + NADH + H(+). It functions in the pathway alkaloid biosynthesis; ergot alkaloid biosynthesis. Functionally, chanoclavine-I dehydrogenase; part of the gene cluster that mediates the biosynthesis of fungal ergot alkaloid. DmaW catalyzes the first step of ergot alkaloid biosynthesis by condensing dimethylallyl diphosphate (DMAP) and tryptophan to form 4-dimethylallyl-L-tryptophan. The second step is catalyzed by the methyltransferase easF that methylates 4-dimethylallyl-L-tryptophan in the presence of S-adenosyl-L-methionine, resulting in the formation of 4-dimethylallyl-L-abrine. The catalase easC and the FAD-dependent oxidoreductase easE then transform 4-dimethylallyl-L-abrine to chanoclavine-I which is further oxidized by easD in the presence of NAD(+), resulting in the formation of chanoclavine-I aldehyde. Agroclavine dehydrogenase easG then mediates the conversion of chanoclavine-I aldehyde to agroclavine via a non-enzymatic adduct reaction: the substrate is an iminium intermediate that is formed spontaneously from chanoclavine-I aldehyde in the presence of glutathione. The presence of easA is not required to complete this reaction. Further conversion of agroclavine to paspalic acid is a two-step process involving oxidation of agroclavine to elymoclavine and of elymoclavine to paspalic acid, the second step being performed by the elymoclavine oxidase cloA. Paspalic acid is then further converted to D-lysergic acid. Ergopeptines are assembled from D-lysergic acid and three different amino acids by the D-lysergyl-peptide-synthetases composed each of a monomudular and a trimodular nonribosomal peptide synthetase subunit. LpsB and lpsC encode the monomodular subunits responsible for D-lysergic acid activation and incorporation into the ergopeptine backbone. LpsA1 and A2 subunits encode the trimodular nonribosomal peptide synthetase assembling the tripeptide portion of ergopeptines. LpsA1 is responsible for formation of the major ergopeptine, ergotamine, and lpsA2 for alpha-ergocryptine, the minor ergopeptine of the total alkaloid mixture elaborated by C.purpurea. D-lysergyl-tripeptides are assembled by the nonribosomal peptide synthetases and released as N-(D-lysergyl-aminoacyl)-lactams. Cyclolization of the D-lysergyl-tripeptides is performed by the Fe(2+)/2-ketoglutarate-dependent dioxygenase easH which introduces a hydroxyl group into N-(D-lysergyl-aminoacyl)-lactam at alpha-C of the aminoacyl residue followed by spontaneous condensation with the terminal lactam carbonyl group. This is Chanoclavine-I dehydrogenase easD from Claviceps purpurea (Ergot fungus).